The primary structure comprises 355 residues: N-acetyl-gamma-glutamyl-phosphate reductase (355 aa).

C152 is a catalytic residue.

It belongs to the NAGSA dehydrogenase family. Type 1 subfamily.

It is found in the cytoplasm. It carries out the reaction N-acetyl-L-glutamate 5-semialdehyde + phosphate + NADP(+) = N-acetyl-L-glutamyl 5-phosphate + NADPH + H(+). It participates in amino-acid biosynthesis; L-arginine biosynthesis; N(2)-acetyl-L-ornithine from L-glutamate: step 3/4. In terms of biological role, catalyzes the NADPH-dependent reduction of N-acetyl-5-glutamyl phosphate to yield N-acetyl-L-glutamate 5-semialdehyde. In Psychrobacter sp. (strain PRwf-1), this protein is N-acetyl-gamma-glutamyl-phosphate reductase.